Reading from the N-terminus, the 944-residue chain is 2-oxoglutarate dehydrogenase E1 component (944 aa).

The disordered stretch occupies residues 914 to 944 (RRRRSSPAEGDPTVHKKEQERIVSDSLTRKN). The span at 925–936 (PTVHKKEQERIV) shows a compositional bias: basic and acidic residues.

This sequence belongs to the alpha-ketoglutarate dehydrogenase family. Homodimer. Part of the 2-oxoglutarate dehydrogenase (OGDH) complex composed of E1 (2-oxoglutarate dehydrogenase), E2 (dihydrolipoamide succinyltransferase) and E3 (dihydrolipoamide dehydrogenase); the complex contains multiple copies of the three enzymatic components (E1, E2 and E3). It depends on thiamine diphosphate as a cofactor.

It catalyses the reaction N(6)-[(R)-lipoyl]-L-lysyl-[protein] + 2-oxoglutarate + H(+) = N(6)-[(R)-S(8)-succinyldihydrolipoyl]-L-lysyl-[protein] + CO2. E1 component of the 2-oxoglutarate dehydrogenase (OGDH) complex which catalyzes the decarboxylation of 2-oxoglutarate, the first step in the conversion of 2-oxoglutarate to succinyl-CoA and CO(2). In Bacillus licheniformis (strain ATCC 14580 / DSM 13 / JCM 2505 / CCUG 7422 / NBRC 12200 / NCIMB 9375 / NCTC 10341 / NRRL NRS-1264 / Gibson 46), this protein is 2-oxoglutarate dehydrogenase E1 component.